The chain runs to 739 residues: BEL1-like homeodomain protein 2 (739 aa).

Disordered stretches follow at residues Ser-23–Val-73 and Leu-143–Thr-222. Over residues Asn-41–Gln-58 the composition is skewed to polar residues. Residues Asn-145–Pro-155 are compositionally biased toward pro residues. The segment covering Thr-179–His-190 has biased composition (low complexity). The tract at residues Ser-316 to Val-332 is SR/KY domain. The interval Lys-341–Ile-378 is disordered. Residues Asp-376–Leu-447 form a BELL domain region. The segment at residues Ala-498–Met-560 is a DNA-binding region (homeobox). Residues Gln-567–Ala-627 are disordered. Positions Glu-576–Gln-585 are enriched in acidic residues. Basic and acidic residues predominate over residues Glu-586–Thr-596. The segment covering Lys-597–Ala-627 has biased composition (low complexity).

Belongs to the TALE/BELL homeobox family. In terms of assembly, may form heterodimeric complexes with TALE/KNOX proteins STM, KNAT1/BP, KNAT2 and KNAT5. Interacts with OFP1, OFP2, OFP4 and OFP5. Interacts with KNATM, isoform KNATM-B. In terms of tissue distribution, expressed in lateral organs.

The protein resides in the nucleus. Its function is as follows. Transcription factor that establishes leaf shape by repressing growth in specific subdomains of the leaf. Negatively regulates knox homeobox gene KNAT1/BP expression. The protein is BEL1-like homeodomain protein 2 (BLH2) of Arabidopsis thaliana (Mouse-ear cress).